The primary structure comprises 548 residues: Membrane-associated tyrosine- and threonine-specific cdc2-inhibitory kinase (548 aa).

Residues 61–89 (PNKQRSWSQPRPQSVSFRSPQNKTPASKL) form a disordered region. A compositionally biased stretch (polar residues) spans 63–85 (KQRSWSQPRPQSVSFRSPQNKTP). The region spanning 103–353 (FKSICKLGRG…VDWLLSLPAI (251 aa)) is the Protein kinase domain. Residues 109–117 (LGRGSFGEV) and Lys-132 contribute to the ATP site. Asp-226 (proton acceptor) is an active-site residue. 3 residues coordinate Mg(2+): Asn-231, Asp-244, and Gly-246. Residues 376-392 (VYQFIVWLLSFVFQWLN) carry the Membrane-association motif motif. The disordered stretch occupies residues 464–523 (SPDLLSRPSLGSTSTPRNLSPEFSMRKRSALPLTPNVSRISQDSTGKSRSPSTSHSSSGF). Over residues 472 to 481 (SLGSTSTPRN) the composition is skewed to polar residues. Thr-478 bears the Phosphothreonine; by CDK1 mark. The span at 507–521 (STGKSRSPSTSHSSS) shows a compositional bias: low complexity.

It belongs to the protein kinase superfamily. Ser/Thr protein kinase family. WEE1 subfamily. Interacts with CDC2-CCNB1 complex. Interacts with Mos during oocyte maturation. Autophosphorylated. Phosphorylated on undefined residues by RSK2 and Mos kinases. Phosphorylation at Thr-478 by cdk1 creates a docking site for plk1/plx1, leading to subsequent phosphorylation by plk1/plk1 and inhibition of the protein kinase activity kinase activity.

The protein resides in the endoplasmic reticulum membrane. The protein localises to the golgi apparatus membrane. It carries out the reaction L-seryl-[protein] + ATP = O-phospho-L-seryl-[protein] + ADP + H(+). It catalyses the reaction L-threonyl-[protein] + ATP = O-phospho-L-threonyl-[protein] + ADP + H(+). Its activity is regulated as follows. Negatively regulated by hyperphosphorylation during mitosis. The plk1/plk1 protein kinase may be required for mitotic phosphorylation. Inactivated during oocyte maturation by phosphorylation by RSK2 and Mos kinase. Its function is as follows. Acts as a negative regulator of entry into mitosis (G2 to M transition) by phosphorylation of the CDK1 kinase specifically when CDK1 is complexed to cyclins. Mediates phosphorylation of CDK1 predominantly on 'Thr-14'. Also involved in Golgi fragmentation. May be involved in phosphorylation of CDK1 on 'Tyr-15' to a lesser degree, however tyrosine kinase activity is unclear and may be indirect. The protein is Membrane-associated tyrosine- and threonine-specific cdc2-inhibitory kinase (pkmyt1) of Xenopus laevis (African clawed frog).